A 1043-amino-acid polypeptide reads, in one-letter code: Isoleucine--tRNA ligase (1043 aa).

L-isoleucyl-5'-AMP-binding residues include Pro46 and His57. Residues 47–57 carry the 'HIGH' region motif; that stretch reads PTANGLPHVGH. Positions 181 and 184 each coordinate Zn(2+). Residues His319 and Asp328 each contribute to the L-valine site. Residues Cys389, Cys392, Cys461, Cys464, Cys502, and Cys504 each coordinate Zn(2+). Positions 550, 551, 553, 554, and 581 each coordinate L-isoleucyl-5'-AMP. A 'KMSKS' region motif is present at residues 591–595; that stretch reads KMSKS. Lys594 serves as a coordination point for ATP.

Belongs to the class-I aminoacyl-tRNA synthetase family. IleS type 2 subfamily. Monomer. It depends on Zn(2+) as a cofactor.

Its subcellular location is the cytoplasm. The catalysed reaction is tRNA(Ile) + L-isoleucine + ATP = L-isoleucyl-tRNA(Ile) + AMP + diphosphate. In terms of biological role, catalyzes the attachment of isoleucine to tRNA(Ile). As IleRS can inadvertently accommodate and process structurally similar amino acids such as valine, to avoid such errors it has two additional distinct tRNA(Ile)-dependent editing activities. One activity is designated as 'pretransfer' editing and involves the hydrolysis of activated Val-AMP. The other activity is designated 'posttransfer' editing and involves deacylation of mischarged Val-tRNA(Ile). The polypeptide is Isoleucine--tRNA ligase (ileS) (Thermus thermophilus (strain ATCC 27634 / DSM 579 / HB8)).